The sequence spans 448 residues: Phosphoglucosamine mutase (448 aa).

S100 functions as the Phosphoserine intermediate in the catalytic mechanism. Residues S100, D240, D242, and D244 each contribute to the Mg(2+) site. Phosphoserine is present on S100.

This sequence belongs to the phosphohexose mutase family. Mg(2+) is required as a cofactor. In terms of processing, activated by phosphorylation.

It carries out the reaction alpha-D-glucosamine 1-phosphate = D-glucosamine 6-phosphate. Functionally, catalyzes the conversion of glucosamine-6-phosphate to glucosamine-1-phosphate. In Bacillus cytotoxicus (strain DSM 22905 / CIP 110041 / 391-98 / NVH 391-98), this protein is Phosphoglucosamine mutase.